We begin with the raw amino-acid sequence, 336 residues long: Protein-glutamate methylesterase/protein-glutamine glutaminase 1 (336 aa).

In terms of domain architecture, Response regulatory spans 2 to 119; the sequence is KIAIVNDMPL…GNPQEAAAPL (118 aa). 4-aspartylphosphate is present on Asp53. A CheB-type methylesterase domain is found at 147 to 336; the sequence is TASRQRLVAI…APRLLEIFPK (190 aa). Residues Ser159, His186, and Asp279 contribute to the active site.

The protein belongs to the CheB family. Post-translationally, phosphorylated by CheA. Phosphorylation of the N-terminal regulatory domain activates the methylesterase activity.

It is found in the cytoplasm. It carries out the reaction [protein]-L-glutamate 5-O-methyl ester + H2O = L-glutamyl-[protein] + methanol + H(+). The enzyme catalyses L-glutaminyl-[protein] + H2O = L-glutamyl-[protein] + NH4(+). Functionally, involved in chemotaxis. Part of a chemotaxis signal transduction system that modulates chemotaxis in response to various stimuli. Catalyzes the demethylation of specific methylglutamate residues introduced into the chemoreceptors (methyl-accepting chemotaxis proteins or MCP) by CheR. Also mediates the irreversible deamidation of specific glutamine residues to glutamic acid. In Pseudomonas fluorescens (strain Pf0-1), this protein is Protein-glutamate methylesterase/protein-glutamine glutaminase 1.